Reading from the N-terminus, the 439-residue chain is MSETHLSTQKFADLPLHPEVKQALAENGFEFCTPIQALSLPVLLQSKDIAGQAQTGTGKTMAFLVATFNHLLSTPIPEGRQINQPRAIIMAPTRELAIQIAKDAILLAKHTRLKVGIVYGGESYDVQRKVLDQGVDILIGTTGRIIDYVRQGIISLTAIQAVVLDEADRMFDLGFIKDIRFLFRRMPDANQRLNMLFSATLSMKVQELAYDHMNDPVKVDIAPDEKTSKNIKEEVFYPSQEDKMRLLLTLIEEDWPEKAIVFSNTKHSCENLWSWLEGDGHRVGLLTGDVPQKKRIRILEQFTSGQLDILVATDVAARGLHISDVSHVYNYDLPDDCEDYVHRIGRTGRAGNKGVSISFACEEYALNLPAIESYINHSIPVSNYDSSALLEDIPAPVKIPRKHPAGTRNLRERAGAGRPQGAHRSGGRPPRHDRTRRHS.

Positions 9–37 (QKFADLPLHPEVKQALAENGFEFCTPIQA) match the Q motif motif. Residues 40–219 (LPVLLQSKDI…YDHMNDPVKV (180 aa)) form the Helicase ATP-binding domain. 53-60 (AQTGTGKT) is an ATP binding site. A DEAD box motif is present at residues 165-168 (DEAD). Residues 243 to 390 (KMRLLLTLIE…VSNYDSSALL (148 aa)) enclose the Helicase C-terminal domain. The disordered stretch occupies residues 398–439 (KIPRKHPAGTRNLRERAGAGRPQGAHRSGGRPPRHDRTRRHS). A compositionally biased stretch (basic residues) spans 425 to 439 (SGGRPPRHDRTRRHS).

This sequence belongs to the DEAD box helicase family. RhlB subfamily. In terms of assembly, component of the RNA degradosome, which is a multiprotein complex involved in RNA processing and mRNA degradation.

The protein localises to the cytoplasm. It carries out the reaction ATP + H2O = ADP + phosphate + H(+). DEAD-box RNA helicase involved in RNA degradation. Has RNA-dependent ATPase activity and unwinds double-stranded RNA. This chain is ATP-dependent RNA helicase RhlB, found in Shewanella putrefaciens (strain CN-32 / ATCC BAA-453).